A 227-amino-acid chain; its full sequence is Cytochrome c oxidase subunit 2 (227 aa).

Over 1–14 (MAYPFQMGLQDATS) the chain is Mitochondrial intermembrane. Residues 15–45 (PIMEELLHFHDHTLMIVFLISSLVLYIISLM) form a helical membrane-spanning segment. The Mitochondrial matrix segment spans residues 46–59 (LTTKLTHTSTMDAQ). The helical transmembrane segment at 60–87 (EVETIWTILPAIILILIALPSLRILYMM) threads the bilayer. Residues 88 to 227 (DEINNPSLTV…HFEKWSASLL (140 aa)) lie on the Mitochondrial intermembrane side of the membrane. Cu cation-binding residues include His-161, Cys-196, Glu-198, Cys-200, His-204, and Met-207. Glu-198 lines the Mg(2+) pocket.

This sequence belongs to the cytochrome c oxidase subunit 2 family. In terms of assembly, component of the cytochrome c oxidase (complex IV, CIV), a multisubunit enzyme composed of 14 subunits. The complex is composed of a catalytic core of 3 subunits MT-CO1, MT-CO2 and MT-CO3, encoded in the mitochondrial DNA, and 11 supernumerary subunits COX4I, COX5A, COX5B, COX6A, COX6B, COX6C, COX7A, COX7B, COX7C, COX8 and NDUFA4, which are encoded in the nuclear genome. The complex exists as a monomer or a dimer and forms supercomplexes (SCs) in the inner mitochondrial membrane with NADH-ubiquinone oxidoreductase (complex I, CI) and ubiquinol-cytochrome c oxidoreductase (cytochrome b-c1 complex, complex III, CIII), resulting in different assemblies (supercomplex SCI(1)III(2)IV(1) and megacomplex MCI(2)III(2)IV(2)). Found in a complex with TMEM177, COA6, COX18, COX20, SCO1 and SCO2. Interacts with TMEM177 in a COX20-dependent manner. Interacts with COX20. Interacts with COX16. Requires Cu cation as cofactor.

It localises to the mitochondrion inner membrane. The catalysed reaction is 4 Fe(II)-[cytochrome c] + O2 + 8 H(+)(in) = 4 Fe(III)-[cytochrome c] + 2 H2O + 4 H(+)(out). In terms of biological role, component of the cytochrome c oxidase, the last enzyme in the mitochondrial electron transport chain which drives oxidative phosphorylation. The respiratory chain contains 3 multisubunit complexes succinate dehydrogenase (complex II, CII), ubiquinol-cytochrome c oxidoreductase (cytochrome b-c1 complex, complex III, CIII) and cytochrome c oxidase (complex IV, CIV), that cooperate to transfer electrons derived from NADH and succinate to molecular oxygen, creating an electrochemical gradient over the inner membrane that drives transmembrane transport and the ATP synthase. Cytochrome c oxidase is the component of the respiratory chain that catalyzes the reduction of oxygen to water. Electrons originating from reduced cytochrome c in the intermembrane space (IMS) are transferred via the dinuclear copper A center (CU(A)) of subunit 2 and heme A of subunit 1 to the active site in subunit 1, a binuclear center (BNC) formed by heme A3 and copper B (CU(B)). The BNC reduces molecular oxygen to 2 water molecules using 4 electrons from cytochrome c in the IMS and 4 protons from the mitochondrial matrix. The chain is Cytochrome c oxidase subunit 2 (MT-CO2) from Ailurus fulgens (Himalayan red panda).